The sequence spans 222 residues: Putative thymidylate synthase (222 aa).

Residue Cys139 is part of the active site.

It belongs to the thymidylate synthase family. Archaeal-type ThyA subfamily. Monomer.

Its subcellular location is the cytoplasm. It participates in pyrimidine metabolism; dTTP biosynthesis. Functionally, may catalyze the biosynthesis of dTMP using an unknown cosubstrate. In Methanocaldococcus jannaschii (strain ATCC 43067 / DSM 2661 / JAL-1 / JCM 10045 / NBRC 100440) (Methanococcus jannaschii), this protein is Putative thymidylate synthase.